The following is a 972-amino-acid chain: Serine/threonine-protein kinase ATG1 (972 aa).

In terms of domain architecture, Protein kinase spans 18 to 319; that stretch reads YVVEKEIGRG…FTEFFSNGLV (302 aa). Residues 24-32 and K48 each bind ATP; that span reads IGRGSFAVV. Catalysis depends on D166, which acts as the Proton acceptor. Disordered stretches follow at residues 359 to 394, 424 to 444, 467 to 506, 562 to 605, and 743 to 764; these read KRAS…QSDQ, YNNQ…SNGR, ALQS…HRTT, ASQA…SRRP, and DDEE…NSSG. Basic and acidic residues predominate over residues 424–436; it reads YNNQEERSNEERQ. Over residues 562-584 the composition is skewed to polar residues; that stretch reads ASQALQMARHSSTSVSAANTAKQ. The span at 585 to 605 shows a compositional bias: low complexity; that stretch reads TLLRRNSRTLSSSGASTSRRP. Residues 750–759 show a composition bias toward basic and acidic residues; it reads EHSPGAETYR.

The protein belongs to the protein kinase superfamily. Ser/Thr protein kinase family. APG1/unc-51/ULK1 subfamily. Homodimer. Forms a ternary complex with ATG13 and ATG17.

The protein resides in the cytoplasm. It localises to the preautophagosomal structure membrane. It catalyses the reaction L-seryl-[protein] + ATP = O-phospho-L-seryl-[protein] + ADP + H(+). It carries out the reaction L-threonyl-[protein] + ATP = O-phospho-L-threonyl-[protein] + ADP + H(+). Serine/threonine protein kinase involved in the cytoplasm to vacuole transport (Cvt) and found to be essential in autophagy, where it is required for the formation of autophagosomes. Involved in the clearance of protein aggregates which cannot be efficiently cleared by the proteasome. Required for selective autophagic degradation of the nucleus (nucleophagy) as well as for mitophagy which contributes to regulate mitochondrial quantity and quality by eliminating the mitochondria to a basal level to fulfill cellular energy requirements and preventing excess ROS production. Also involved in endoplasmic reticulum-specific autophagic process, in selective removal of ER-associated degradation (ERAD) substrates. Plays a key role in ATG9 and ATG23 cycling through the pre-autophagosomal structure and is necessary to promote ATG18 binding to ATG9 through phosphorylation of ATG9. Catalyzes phosphorylation of ATG4, decreasing the interaction between ATG4 and ATG8 and impairing deconjugation of PE-conjugated forms of ATG8. The chain is Serine/threonine-protein kinase ATG1 from Eremothecium gossypii (strain ATCC 10895 / CBS 109.51 / FGSC 9923 / NRRL Y-1056) (Yeast).